A 142-amino-acid polypeptide reads, in one-letter code: HTH-type transcriptional regulator MntR (142 aa).

Residues 1 to 63 (MPTPSMEDYI…YEKYRGLILT (63 aa)) enclose the HTH dtxR-type domain. Asp8, Glu11, His77, Glu99, Glu102, and His103 together coordinate Mn(2+).

The protein belongs to the DtxR/MntR family. Homodimer.

The protein localises to the cytoplasm. With respect to regulation, DNA binding is strongly activated by Mn(2+). Its function is as follows. Central regulator of manganese homeostasis. This is HTH-type transcriptional regulator MntR from Listeria innocua serovar 6a (strain ATCC BAA-680 / CLIP 11262).